A 321-amino-acid polypeptide reads, in one-letter code: Epoxyqueuosine reductase (321 aa).

D137 acts as the Proton donor in catalysis. The region spanning 179–211 (EPLNADPPARSLCGRCSACIDACPTHAIREPFV) is the 4Fe-4S ferredoxin-type domain. [4Fe-4S] cluster is bound by residues C191, C194, C197, C201, C217, C245, C248, and C252.

This sequence belongs to the QueG family. As to quaternary structure, monomer. Cob(II)alamin is required as a cofactor. The cofactor is [4Fe-4S] cluster.

The protein resides in the cytoplasm. The catalysed reaction is epoxyqueuosine(34) in tRNA + AH2 = queuosine(34) in tRNA + A + H2O. It participates in tRNA modification; tRNA-queuosine biosynthesis. In terms of biological role, catalyzes the conversion of epoxyqueuosine (oQ) to queuosine (Q), which is a hypermodified base found in the wobble positions of tRNA(Asp), tRNA(Asn), tRNA(His) and tRNA(Tyr). This Synechococcus sp. (strain CC9605) protein is Epoxyqueuosine reductase.